Consider the following 557-residue polypeptide: UvrABC system protein C (557 aa).

Residues glutamate 14–valine 89 enclose the GIY-YIG domain. One can recognise a UVR domain in the interval glutamate 194–valine 229.

It belongs to the UvrC family. As to quaternary structure, interacts with UvrB in an incision complex.

Its subcellular location is the cytoplasm. Functionally, the UvrABC repair system catalyzes the recognition and processing of DNA lesions. UvrC both incises the 5' and 3' sides of the lesion. The N-terminal half is responsible for the 3' incision and the C-terminal half is responsible for the 5' incision. The protein is UvrABC system protein C of Thermotoga petrophila (strain ATCC BAA-488 / DSM 13995 / JCM 10881 / RKU-1).